Here is a 230-residue protein sequence, read N- to C-terminus: ATP synthase subunit a 1 (230 aa).

Transmembrane regions (helical) follow at residues 20–40 (ATIVFSWLVMLILVLGSWLIT), 78–98 (FLPFIGTLFLFITMANLLTIF), 112–132 (AALALCVFVAVPIYGIKNVGI), 174–194 (LLVAILISIVPLFFPAVMTLF), and 195–215 (GLLVGVIQAYVFTILAMVYIA).

It belongs to the ATPase A chain family. As to quaternary structure, F-type ATPases have 2 components, CF(1) - the catalytic core - and CF(0) - the membrane proton channel. CF(1) has five subunits: alpha(3), beta(3), gamma(1), delta(1), epsilon(1). CF(0) has four main subunits: a, b, b' and c.

It is found in the cellular thylakoid membrane. In terms of biological role, key component of the proton channel; it plays a direct role in the translocation of protons across the membrane. This Crocosphaera subtropica (strain ATCC 51142 / BH68) (Cyanothece sp. (strain ATCC 51142)) protein is ATP synthase subunit a 1.